The following is a 272-amino-acid chain: Phosphate import ATP-binding protein PstB (272 aa).

One can recognise an ABC transporter domain in the interval 18-257; that stretch reads VSIQNATISY…FNDTDKIFNA (240 aa). 50–57 contacts ATP; it reads GPSGCGKS.

Belongs to the ABC transporter superfamily. Phosphate importer (TC 3.A.1.7) family. The complex is composed of two ATP-binding proteins (PstB), two transmembrane proteins (PstC and PstA) and a solute-binding protein (PstS).

The protein resides in the cell inner membrane. The catalysed reaction is phosphate(out) + ATP + H2O = ADP + 2 phosphate(in) + H(+). Part of the ABC transporter complex PstSACB involved in phosphate import. Responsible for energy coupling to the transport system. The protein is Phosphate import ATP-binding protein PstB of Synechococcus sp. (strain CC9311).